An 894-amino-acid chain; its full sequence is Alanine--tRNA ligase (894 aa).

Residues histidine 569, histidine 573, cysteine 683, and histidine 687 each coordinate Zn(2+).

The protein belongs to the class-II aminoacyl-tRNA synthetase family. Zn(2+) is required as a cofactor.

The protein resides in the cytoplasm. It catalyses the reaction tRNA(Ala) + L-alanine + ATP = L-alanyl-tRNA(Ala) + AMP + diphosphate. Its function is as follows. Catalyzes the attachment of alanine to tRNA(Ala) in a two-step reaction: alanine is first activated by ATP to form Ala-AMP and then transferred to the acceptor end of tRNA(Ala). Also edits incorrectly charged Ser-tRNA(Ala) and Gly-tRNA(Ala) via its editing domain. This Chloroflexus aurantiacus (strain ATCC 29366 / DSM 635 / J-10-fl) protein is Alanine--tRNA ligase.